We begin with the raw amino-acid sequence, 299 residues long: Dihydroorotate dehydrogenase B (NAD(+)), catalytic subunit (299 aa).

FMN contacts are provided by residues Ser19 and 43 to 44 (KS). Substrate contacts are provided by residues Lys43, 67 to 71 (NAMGL), and Asn121. Position 121 (Asn121) interacts with FMN. Cys124 serves as the catalytic Nucleophile. FMN is bound by residues Lys159 and Ile185. Position 186-187 (186-187 (NT)) interacts with substrate. Residues Gly211, 237 to 238 (GG), and 259 to 260 (GT) each bind FMN.

This sequence belongs to the dihydroorotate dehydrogenase family. Type 1 subfamily. As to quaternary structure, heterotetramer of 2 PyrK and 2 PyrD type B subunits. Requires FMN as cofactor.

It is found in the cytoplasm. The enzyme catalyses (S)-dihydroorotate + NAD(+) = orotate + NADH + H(+). Its pathway is pyrimidine metabolism; UMP biosynthesis via de novo pathway; orotate from (S)-dihydroorotate (NAD(+) route): step 1/1. Catalyzes the conversion of dihydroorotate to orotate with NAD(+) as electron acceptor. This chain is Dihydroorotate dehydrogenase B (NAD(+)), catalytic subunit (pyrD), found in Pyrococcus abyssi (strain GE5 / Orsay).